Reading from the N-terminus, the 540-residue chain is Sesquiterpene synthase 15b (540 aa).

3 residues coordinate Mg(2+): Asp-292, Asp-296, and Glu-445. A DDXXD motif motif is present at residues 292 to 296 (DDIYD).

This sequence belongs to the terpene synthase family. Tpsa subfamily. Mg(2+) serves as cofactor. Mn(2+) is required as a cofactor.

The enzyme catalyses (2E,6E)-farnesyl diphosphate = germacrene A + diphosphate. It participates in secondary metabolite biosynthesis; terpenoid biosynthesis. Sesquiterpene synthase involved in the biosynthesis of volatile compounds. Mediates the conversion of (2E,6E)-farnesyl diphosphate (FPP) into germacrene A. The protein is Sesquiterpene synthase 15b of Solanum habrochaites (Wild tomato).